A 125-amino-acid chain; its full sequence is RutC family protein aq_364 (125 aa).

This sequence belongs to the RutC family.

The polypeptide is RutC family protein aq_364 (Aquifex aeolicus (strain VF5)).